The primary structure comprises 224 residues: UPF0173 metal-dependent hydrolase Memar_1421 (224 aa).

The protein belongs to the UPF0173 family.

The polypeptide is UPF0173 metal-dependent hydrolase Memar_1421 (Methanoculleus marisnigri (strain ATCC 35101 / DSM 1498 / JR1)).